A 489-amino-acid polypeptide reads, in one-letter code: Cysteine--tRNA ligase (489 aa).

Residue cysteine 29 participates in Zn(2+) binding. The short motif at 31–41 is the 'HIGH' region element; that stretch reads ITSYDYCHIGH. Zn(2+)-binding residues include cysteine 209, histidine 234, and glutamate 238. A 'KMSKS' region motif is present at residues 266–270; sequence KMSKS. Lysine 269 contributes to the ATP binding site.

This sequence belongs to the class-I aminoacyl-tRNA synthetase family. As to quaternary structure, monomer. It depends on Zn(2+) as a cofactor.

Its subcellular location is the cytoplasm. The enzyme catalyses tRNA(Cys) + L-cysteine + ATP = L-cysteinyl-tRNA(Cys) + AMP + diphosphate. In Desulfotalea psychrophila (strain LSv54 / DSM 12343), this protein is Cysteine--tRNA ligase.